Consider the following 364-residue polypeptide: Ribosomal RNA large subunit methyltransferase M (364 aa).

S-adenosyl-L-methionine contacts are provided by residues Ser-198, 231–234 (APGG), Asp-250, Asp-270, and Asp-286. Catalysis depends on Lys-315, which acts as the Proton acceptor.

Belongs to the class I-like SAM-binding methyltransferase superfamily. RNA methyltransferase RlmE family. RlmM subfamily. As to quaternary structure, monomer.

Its subcellular location is the cytoplasm. It carries out the reaction cytidine(2498) in 23S rRNA + S-adenosyl-L-methionine = 2'-O-methylcytidine(2498) in 23S rRNA + S-adenosyl-L-homocysteine + H(+). Its function is as follows. Catalyzes the 2'-O-methylation at nucleotide C2498 in 23S rRNA. This Thauera aminoaromatica protein is Ribosomal RNA large subunit methyltransferase M.